Reading from the N-terminus, the 750-residue chain is Photosystem I P700 chlorophyll a apoprotein A1 (750 aa).

The next 8 membrane-spanning stretches (helical) occupy residues 70 to 93 (VFSA…FHGA), 156 to 179 (LYCT…FHYH), 195 to 219 (LNHH…HVSL), 291 to 309 (IAHH…GHMY), 346 to 369 (WHAQ…HHMY), 385 to 411 (LSLF…IFMV), 433 to 455 (AIIS…LYIH), and 531 to 549 (FLVH…LILL). [4Fe-4S] cluster-binding residues include cysteine 573 and cysteine 582. 2 helical membrane passes run 589–610 (HVFL…HFSW) and 664–686 (LSAY…MFLF). Position 675 (histidine 675) interacts with chlorophyll a'. Chlorophyll a is bound by residues methionine 683 and tyrosine 691. Tryptophan 692 is a phylloquinone binding site. Residues 724–744 (AVGVTHYLLGGIATTWAFFLA) traverse the membrane as a helical segment.

This sequence belongs to the PsaA/PsaB family. In terms of assembly, the PsaA/B heterodimer binds the P700 chlorophyll special pair and subsequent electron acceptors. PSI consists of a core antenna complex that captures photons, and an electron transfer chain that converts photonic excitation into a charge separation. The eukaryotic PSI reaction center is composed of at least 11 subunits. P700 is a chlorophyll a/chlorophyll a' dimer, A0 is one or more chlorophyll a, A1 is one or both phylloquinones and FX is a shared 4Fe-4S iron-sulfur center. is required as a cofactor.

It is found in the plastid. Its subcellular location is the chloroplast thylakoid membrane. It carries out the reaction reduced [plastocyanin] + hnu + oxidized [2Fe-2S]-[ferredoxin] = oxidized [plastocyanin] + reduced [2Fe-2S]-[ferredoxin]. Its function is as follows. PsaA and PsaB bind P700, the primary electron donor of photosystem I (PSI), as well as the electron acceptors A0, A1 and FX. PSI is a plastocyanin-ferredoxin oxidoreductase, converting photonic excitation into a charge separation, which transfers an electron from the donor P700 chlorophyll pair to the spectroscopically characterized acceptors A0, A1, FX, FA and FB in turn. Oxidized P700 is reduced on the lumenal side of the thylakoid membrane by plastocyanin. The sequence is that of Photosystem I P700 chlorophyll a apoprotein A1 from Atropa belladonna (Belladonna).